A 523-amino-acid chain; its full sequence is Sorting nexin-2 (523 aa).

The tract at residues 1-104 (MAAEREPPPL…EPSPAVTPVT (104 aa)) is disordered. 2 stretches are compositionally biased toward low complexity: residues 27-48 (LFTS…TSLP) and 93-104 (SSEPSPAVTPVT). S97 is modified (phosphoserine). T101 and T104 each carry phosphothreonine. Phosphoserine is present on residues S117 and S119. The 130-residue stretch at 140–269 (FDIEIGVSDP…QFLESSELPR (130 aa)) folds into the PX domain. 4 residues coordinate a 1,2-diacyl-sn-glycero-3-phospho-(1D-myo-inositol-3-phosphate): R183, S185, K211, and R235. S185 carries the post-translational modification Phosphoserine. Residues 260–523 (QFLESSELPR…AFLPEAKAIA (264 aa)) form an interaction with RhoG region. A Phosphoserine modification is found at S277. Residues 278-295 (GAGILRMVNKAADAVNKM) are membrane-binding amphipathic helix. The BAR domain maps to 299–523 (MNESDAWFEE…AFLPEAKAIA (225 aa)). At K473 the chain carries N6-acetyllysine.

It belongs to the sorting nexin family. As to quaternary structure, predominantly forms heterodimers with BAR domain-containing sorting nexins SNX5, SNX6 and SNX32; can self-associate to form homodimers. The heterodimers are proposed to self-assemble into helical arrays on the membrane to stabilize and expand local membrane curvature underlying endosomal tubule formation. Thought to be a component of the originally described retromer complex (also called SNX-BAR retromer) which is a pentamer containing the heterotrimeric retromer cargo-selective complex (CSC), also described as vacuolar protein sorting subcomplex (VPS), and a heterodimeric membrane-deforming subcomplex formed between SNX1 or SNX2 and SNX5 or SNX6 (also called SNX-BAR subcomplex); the respective CSC and SNX-BAR subcomplexes associate with low affinity. Interacts with SNX5, SNX6, SNX32, VPS26A, VPS29, VPS35, FNBP1, KALRN, RHOG (GDP-bound form).

Its subcellular location is the early endosome membrane. It localises to the cell projection. The protein localises to the lamellipodium. Functionally, involved in several stages of intracellular trafficking. Interacts with membranes containing phosphatidylinositol 3-phosphate (PtdIns(3P)) or phosphatidylinositol 3,5-bisphosphate (PtdIns(3,5)P2). Acts in part as component of the retromer membrane-deforming SNX-BAR subcomplex. The SNX-BAR retromer mediates retrograde transport of cargo proteins from endosomes to the trans-Golgi network (TGN) and is involved in endosome-to-plasma membrane transport for cargo protein recycling. The SNX-BAR subcomplex functions to deform the donor membrane into a tubular profile called endosome-to-TGN transport carrier (ETC). Can sense membrane curvature and has in vitro vesicle-to-membrane remodeling activity. Required for retrograde endosome-to-TGN transport of TGN38. Promotes KALRN- and RHOG-dependent but retromer-independent membrane remodeling such as lamellipodium formation; the function is dependent on GEF activity of KALRN. This is Sorting nexin-2 (SNX2) from Pongo abelii (Sumatran orangutan).